Here is a 531-residue protein sequence, read N- to C-terminus: Putative F-box protein At2g02890 (531 aa).

Residues 141 to 188 enclose the F-box domain; it reads RHSSSLTNDLIEEILSRLHSKSVARFRCVSKQCASMFASPYFKKLFQT.

The protein is Putative F-box protein At2g02890 of Arabidopsis thaliana (Mouse-ear cress).